The sequence spans 583 residues: Cysteine/serine-rich nuclear protein 1 (583 aa).

Disordered regions lie at residues 1–79 and 306–381; these read MTGL…APRE and AESL…RSGV. Positions 18–41 are enriched in low complexity; sequence SSSSSSSFSSRLSLSSFPASSASP. Polar residues predominate over residues 54 to 69; sequence APQSDQDSCGLQSFTP. The span at 335–361 shows a compositional bias: low complexity; the sequence is PVSSELGDSSCSSDMTDSSTTLSSGSS. Residues 364-373 show a composition bias toward pro residues; that stretch reads PNHPAHPSLP.

The protein belongs to the AXUD1 family. Widely expressed with highest levels in thymus and lung. Low levels detected in naive T-cells.

The protein localises to the nucleus. In terms of biological role, binds to the consensus sequence 5'-AGAGTG-3' and has transcriptional activator activity. May have a tumor-suppressor function. May play a role in apoptosis. This chain is Cysteine/serine-rich nuclear protein 1 (Csrnp1), found in Mus musculus (Mouse).